We begin with the raw amino-acid sequence, 268 residues long: Testis-specific serine/threonine-protein kinase 3 (268 aa).

In terms of domain architecture, Protein kinase spans 10-265 (YQLGKTIGEG…IEEVSWHPWL (256 aa)). ATP-binding positions include 16–24 (IGEGTYSKV) and lysine 39. Aspartate 134 serves as the catalytic Proton acceptor. Position 166 is a phosphoserine; by autocatalysis (serine 166). Threonine 168 carries the post-translational modification Phosphothreonine; by PDPK1.

Belongs to the protein kinase superfamily. CAMK Ser/Thr protein kinase family. It depends on Mg(2+) as a cofactor. Mn(2+) is required as a cofactor. Autophosphorylated at Ser-166. Phosphorylation at Thr-168 by PDPK1 activates the serine/threonine protein kinase activity. As to expression, developmentally expressed in testicular germ cells. In adult testis, expression was detected in round and condensing spermatids, but not in meiotic pachytene spermatocytes. Not expressed in brain, ovary, kidney, liver or early embryonic cells.

It localises to the cell projection. Its subcellular location is the cilium. The protein resides in the flagellum. The enzyme catalyses L-seryl-[protein] + ATP = O-phospho-L-seryl-[protein] + ADP + H(+). The catalysed reaction is L-threonyl-[protein] + ATP = O-phospho-L-threonyl-[protein] + ADP + H(+). Its activity is regulated as follows. Activated by phosphorylation on Thr-168 by PDPK1. Its function is as follows. Serine/threonine protein kinase required for spermatid development and male fertility. The polypeptide is Testis-specific serine/threonine-protein kinase 3 (Mus musculus (Mouse)).